The following is a 620-amino-acid chain: Glutathione-regulated potassium-efflux system protein KefC (620 aa).

A run of 12 helical transmembrane segments spans residues 4–24 (HTLL…PIAV), 26–46 (LGLG…PWGL), 54–74 (SILH…GLEL), 90–110 (GALQ…FLGL), 114–134 (VAEL…MQAM), 149–169 (FAVL…IPLL), 178–198 (LGAF…VVLL), 218–238 (VFSA…EEVG), 270–290 (GLLL…GTLV), 294–314 (LRIL…LWLV), 327–347 (WFAV…GAAQ), and 359–379 (ALTL…VLLT). Residues 399–518 (QPRVIVAGFG…AGVAMPERET (120 aa)) form the RCK N-terminal domain. Residues 599 to 620 (QGTAEGKHSGEAADEPEVKPSI) form a disordered region.

It belongs to the monovalent cation:proton antiporter 2 (CPA2) transporter (TC 2.A.37) family. KefC subfamily. As to quaternary structure, homodimer. Interacts with the regulatory subunit KefF.

The protein resides in the cell inner membrane. Its function is as follows. Pore-forming subunit of a potassium efflux system that confers protection against electrophiles. Catalyzes K(+)/H(+) antiport. This chain is Glutathione-regulated potassium-efflux system protein KefC, found in Salmonella schwarzengrund (strain CVM19633).